The chain runs to 279 residues: uncharacterized protein (279 aa).

3 consecutive transmembrane segments (helical) span residues 1–21 (MGFI…LCGI), 38–58 (FACH…SVVA), and 131–151 (SLRY…VFID).

Belongs to the 1-acyl-sn-glycerol-3-phosphate acyltransferase family.

The protein localises to the endoplasmic reticulum membrane. This is an uncharacterized protein from Schizosaccharomyces pombe (strain 972 / ATCC 24843) (Fission yeast).